The sequence spans 209 residues: MSVHAIQHPLVKHKLGLMREAGISTKSFRELASEVAKLLTYEATQDLETQKTEIPGWSGEMLEVELLKGKKVTVVPILRAGLGMLDGVTDLIPSARVSVVGLYRNEETLEPVPYFEKFVGDLDERLAIVIDPMLATGGSMVATLDMLKARGCPLVKVIVLVAAPEGIARVQEAYPDVEIYTASIDERLDENGYIVPGLGDAGDKIFGTR.

5-phospho-alpha-D-ribose 1-diphosphate-binding positions include Arg79, Arg104, and 131 to 139 (DPMLATGGS). Residues Ile194 and 199–201 (GDA) contribute to the uracil site. Asp200 is a 5-phospho-alpha-D-ribose 1-diphosphate binding site.

It belongs to the UPRTase family. Mg(2+) is required as a cofactor.

It carries out the reaction UMP + diphosphate = 5-phospho-alpha-D-ribose 1-diphosphate + uracil. The protein operates within pyrimidine metabolism; UMP biosynthesis via salvage pathway; UMP from uracil: step 1/1. Its activity is regulated as follows. Allosterically activated by GTP. Functionally, catalyzes the conversion of uracil and 5-phospho-alpha-D-ribose 1-diphosphate (PRPP) to UMP and diphosphate. The sequence is that of Uracil phosphoribosyltransferase from Chromohalobacter salexigens (strain ATCC BAA-138 / DSM 3043 / CIP 106854 / NCIMB 13768 / 1H11).